The chain runs to 789 residues: LPS-assembly protein LptD (789 aa).

Positions 1 to 39 (MPPRQLSQTTPSCAVVPRKRRLVAALIAVPGLMPALAHA) are cleaved as a signal peptide.

The protein belongs to the LptD family. Component of the lipopolysaccharide transport and assembly complex. Interacts with LptE and LptA.

The protein localises to the cell outer membrane. Together with LptE, is involved in the assembly of lipopolysaccharide (LPS) at the surface of the outer membrane. The polypeptide is LPS-assembly protein LptD (Paraburkholderia xenovorans (strain LB400)).